The chain runs to 877 residues: Lipophilic envelope-spanning tunnel protein B (877 aa).

Residues 1 to 19 (MSQETPASTTEAQIKNKRR) are Cytoplasmic-facing. A helical membrane pass occupies residues 20 to 40 (ISPFWLLPFIALMIASWLIWD). Residues 41 to 877 (SYQDRGNTVT…WREWGTALPK (837 aa)) are Periplasmic-facing. MCE/MlaD regions lie at residues 46–149 (GNTV…VALD), 160–272 (DLMI…GLYE), 279–382 (RGVI…VVPG), 391–499 (DVLT…PLYA), 515–625 (TTVS…ILYA), 634–737 (GGQI…LQEA), and 746–862 (DGLS…LLQE).

This sequence belongs to the PqiB family. As to quaternary structure, homohexamer. May interact with LetA in the inner membrane. May also interact with partners in the outer membrane.

Its subcellular location is the cell inner membrane. Forms a tunnel that spans the entire periplasmic space. Is probably involved in the transport of lipids between the inner membrane and the outer membrane through the tunnel. Forms a dynamic tunnel sufficiently long to mediate lipid transport directly between the two membranes without the need for a shuttle protein. Binds phospholipids. Lipids bind inside the tunnel. Required for outer membrane homeostasis. Contributes to membrane integrity. The protein is Lipophilic envelope-spanning tunnel protein B of Escherichia coli (strain K12).